The following is a 572-amino-acid chain: MSKIAFRMENICKSFDNGRVKANVDVNLTVYENTVHTLLGENGAGKSTLTSILFGLYQPDSGKIFIGEEEVHFKSSKDAVQHKIGMVHQHFKLVDNYTVLDNIILGNESSFSIPFTNGKLKLPLLHRKASEAKIQAMMERYDLHVNLHQKVSRLTVGQQQRVEILKVLFRDSDILIFDEPTAVLSDQEIKSFLNIIKNFKKMGKTIVLISHKLNEIKEVAETATILRQGHSVGTFQIKDTSIDEMARLMMGKELKETKNNTQFTAKGEPVLKVENLHLYLNQNWFYKLIARWNQKRINQLQKQGKPAKTLWLKSWLEGLAAIEKTPRFIRGIVNNLGFGSQQVFDKGISFEIHKGEIFAIAGVEGNGQNQLIDLICGLEKAAPKKVFFNGFDISRYSIRKRINAGIGFVLEDRHKYGLILDQTVRFNAVNNQIDRKQFSSWNFLNQMQIAVYTNQIVDKFDVRGAVQGTAIVRLLSGGNQQKLIIGRELTKQNELLVFAQVTRGLDVGAISFIHQKILDAKKQNNAILLVSYELDEILAIADTIGVINKGNLLEVNKRDVMTRERIGKLIMQ.

ABC transporter domains follow at residues 6–253 and 327–572; these read FRME…MGKE and RFIR…LIMQ. 40–47 provides a ligand contact to ATP; that stretch reads GENGAGKS.

It belongs to the ABC transporter superfamily.

Its subcellular location is the cell membrane. Part of the ABC transporter complex involved in carbohydrates import. Probably responsible for energy coupling to the transport system. The polypeptide is Putative carbohydrate transport ATP-binding protein MPN_258 (Mycoplasma pneumoniae (strain ATCC 29342 / M129 / Subtype 1) (Mycoplasmoides pneumoniae)).